Here is a 209-residue protein sequence, read N- to C-terminus: uncharacterized protein (209 aa).

A compositionally biased stretch (basic and acidic residues) spans 1–15; that stretch reads MHRIDTKTAQKDKFG. The segment at 1-34 is disordered; the sequence is MHRIDTKTAQKDKFGAGKNGFTRGNPQTGTPATD. Positions 22 to 31 are enriched in polar residues; that stretch reads TRGNPQTGTP.

It to E.coli YfdL and M.jannaschii MJ0347.

This is an uncharacterized protein from Escherichia coli (strain K12).